The primary structure comprises 160 residues: Twist-related protein 2 (160 aa).

Positions 1–63 (MEEGSSSPVS…GSPSAQSFEE (63 aa)) are disordered. The segment covering 27-37 (KRFGRKRRYSK) has biased composition (basic residues). The 52-residue stretch at 66–117 (SQRILANVRERQRTQSLNEAFAALRKIIPTLPSDKLSKIQTLKLAARYIDFL) folds into the bHLH domain.

Efficient DNA binding requires dimerization with another bHLH protein. Forms a heterodimer with TCF3/E12. Also interacts with MEF2C. In the embryo, highly expressed in chondrogenic cells. In embryonic skin, expressed in the undifferentiated mesenchymal layer beneath the epidermis which later develops into the dermis. Expressed in early myeloid cells but not in lymphoid cells in the liver. Expression also detected in the secretory ependymal epithelium of the choroid plexus primordium. In the adult, expressed in secreting glandular tissues and tubules.

The protein localises to the nucleus. The protein resides in the cytoplasm. Functionally, binds to the E-box consensus sequence 5'-CANNTG-3' as a heterodimer and inhibits transcriptional activation by MYOD1, MYOG, MEF2A and MEF2C. Also represses expression of pro-inflammatory cytokines such as TNFA and IL1B. Involved in postnatal glycogen storage and energy metabolism. Inhibits the premature or ectopic differentiation of preosteoblast cells during osteogenesis, possibly by changing the internal signal transduction response of osteoblasts to external growth factors. The chain is Twist-related protein 2 (TWIST2) from Homo sapiens (Human).